A 243-amino-acid chain; its full sequence is Venom nerve growth factor (243 aa).

Residues 1 to 18 (MSMLCYTLIIAFLIGIWA) form the signal peptide. The propeptide occupies 19-125 (APKSEDNVPL…TLNRNIRTKR (107 aa)). Residues 45–66 (HEGLKTSRNTDQRHLAPKKAED) are disordered. Basic and acidic residues predominate over residues 46–66 (EGLKTSRNTDQRHLAPKKAED). Cystine bridges form between C139–C204, C182–C232, and C192–C234. The N-linked (GlcNAc...) asparagine glycan is linked to N148.

Belongs to the NGF-beta family. As to quaternary structure, homodimer; non-covalently linked. As to expression, expressed by the venom gland.

The protein localises to the secreted. Functionally, nerve growth factor is important for the development and maintenance of the sympathetic and sensory nervous systems. It stimulates division and differentiation of sympathetic and embryonic sensory neurons as well as basal forebrain cholinergic neurons in the brain. Its relevance in the snake venom is not clear. However, it has been shown to inhibit metalloproteinase-dependent proteolysis of platelet glycoprotein Ib alpha, suggesting a metalloproteinase inhibition to prevent metalloprotease autodigestion and/or protection against prey proteases. Binds a lipid between the two protein chains in the homodimer. The lipid-bound form promotes histamine relase from mouse mast cells, contrary to the lipid-free form. This is Venom nerve growth factor from Cryptophis nigrescens (Eastern small-eyed snake).